A 122-amino-acid polypeptide reads, in one-letter code: Large ribosomal subunit protein uL14 (122 aa).

It belongs to the universal ribosomal protein uL14 family. In terms of assembly, part of the 50S ribosomal subunit. Forms a cluster with proteins L3 and L19. In the 70S ribosome, L14 and L19 interact and together make contacts with the 16S rRNA in bridges B5 and B8.

In terms of biological role, binds to 23S rRNA. Forms part of two intersubunit bridges in the 70S ribosome. The sequence is that of Large ribosomal subunit protein uL14 from Shouchella clausii (strain KSM-K16) (Alkalihalobacillus clausii).